Consider the following 100-residue polypeptide: MQLAKVLGTVVSTSKTPNLTGVKLLLVQFLDTKGQPLERYEVAGDVVGAGLNEWVLVARGSAARKERGNGDRPLDAMVVGIIDTVNVASGSLYNKRDDGR.

Positions 1–83 constitute a BMV domain; the sequence is MQLAKVLGTV…LDAMVVGIID (83 aa).

It belongs to the CcmL/EutN family. CcmL subfamily. In terms of assembly, homopentamer. Interacts with full-length CcmM.

It localises to the carboxysome. In terms of biological role, probably forms vertices in the carboxysome, a polyhedral inclusion where RuBisCO (ribulose bisphosphate carboxylase, rbcL-rbcS) is sequestered. Has been modeled to induce curvature upon insertion into an otherwise flat hexagonal molecular layer of CcmK subunits. This Synechocystis sp. (strain ATCC 27184 / PCC 6803 / Kazusa) protein is Carboxysome shell vertex protein CcmL.